Reading from the N-terminus, the 306-residue chain is Beta-lactamase 1 (306 aa).

A signal peptide spans 1–43 (MKNKRMLKIGMCVGILGLSVTSLEAFTGGALQVEAKEKTGQVK). Serine 89 acts as the Acyl-ester intermediate in catalysis. Glutamate 185 serves as the catalytic Proton acceptor. 251–253 (KSG) provides a ligand contact to substrate.

This sequence belongs to the class-A beta-lactamase family.

The catalysed reaction is a beta-lactam + H2O = a substituted beta-amino acid. Its function is as follows. This protein is a beta-lactamase with a substrate specificity for penicillins. The sequence is that of Beta-lactamase 1 (blaCI) from Bacillus mycoides.